We begin with the raw amino-acid sequence, 744 residues long: Cell surface receptor daf-4 (744 aa).

A signal peptide spans 1–31; the sequence is MNQKGTVRLKALVLICLPLFLIATPVPVAVT. At 48 to 253 the chain is on the extracellular side; that stretch reads WANTLVSKVA…IALLILAYVG (206 aa). N-linked (GlcNAc...) asparagine glycosylation is found at Asn-60, Asn-134, and Asn-165. A helical membrane pass occupies residues 254–274; the sequence is WKFQQNKKEEIKKQQKIKFDM. Residues 275 to 744 lie on the Cytoplasmic side of the membrane; the sequence is EKTDALEAGN…PSGTFGTFTT (470 aa). The Protein kinase domain maps to 306-603; that stretch reads ITDFQLISKG…FARVWNHIMS (298 aa). Residues 312-320 and Lys-338 each bind ATP; that span reads ISKGRFGKV. The active-site Proton acceptor is the Asp-440. Disordered stretches follow at residues 605–686 and 724–744; these read PDSS…PEPE and AGADTRASTPTPSGTFGTFTT. Over residues 620–639 the composition is skewed to basic and acidic residues; the sequence is RGVDDVEQSEKPEGIEEMQH. The segment covering 731-744 has biased composition (low complexity); the sequence is STPTPSGTFGTFTT.

It belongs to the protein kinase superfamily. TKL Ser/Thr protein kinase family. TGFB receptor subfamily. In terms of assembly, may interact with daf-1 to regulate dauer larva development. Interacts with sma-10. Pharynx, intestine, hypodermis and body wall muscles in L1 through to adult stages. Also expressed in head neurons, ventral cord and tail neurons. Subset of head neurons show coexpression with daf-1 when dauer/nondauer decision is made.

Its subcellular location is the cell membrane. The catalysed reaction is L-threonyl-[receptor-protein] + ATP = O-phospho-L-threonyl-[receptor-protein] + ADP + H(+). It catalyses the reaction L-seryl-[receptor-protein] + ATP = O-phospho-L-seryl-[receptor-protein] + ADP + H(+). Involved in a TGF-beta pathway. May be a receptor for TGF-beta-like ligand daf-7. Controls the decision of whether or not larvae enter a developmentally arrested state, known as dauer, in response to environmental conditions. Regulates body size and male tail patterning. Involved in regulating entry into quiescence triggered by satiety. Involved in sensitivity to CO2 levels. In Caenorhabditis elegans, this protein is Cell surface receptor daf-4.